We begin with the raw amino-acid sequence, 390 residues long: Endoglucanase gh5-1 (390 aa).

The first 16 residues, 1–16 (MKATILASTFAAGALA), serve as a signal peptide directing secretion. The CBM1 domain occupies 17–52 (QSGAWGQCGGNGWSGATSCISGYACNYVNDWYSQCQ). 2 N-linked (GlcNAc...) asparagine glycosylation sites follow: N157 and N261.

The protein belongs to the glycosyl hydrolase 5 (cellulase A) family. In terms of processing, N-glycosylated.

It localises to the secreted. The catalysed reaction is Endohydrolysis of (1-&gt;4)-beta-D-glucosidic linkages in cellulose, lichenin and cereal beta-D-glucans.. In terms of biological role, endoglucanase that plays an important role in biomass degradation. Binds onto plant cell walls to participate in the hydrolysis of cellulose. In Neurospora crassa (strain ATCC 24698 / 74-OR23-1A / CBS 708.71 / DSM 1257 / FGSC 987), this protein is Endoglucanase gh5-1.